The primary structure comprises 355 residues: Holliday junction branch migration complex subunit RuvB (355 aa).

The disordered stretch occupies residues 1–43 (MEEMDDFTVRRGEREDITGAAGPPEERPLDPAAFEEDDEPTLR). The large ATPase domain (RuvB-L) stretch occupies residues 4 to 203 (MDDFTVRRGE…FGFSARLDYY (200 aa)). Residues 7-17 (FTVRRGEREDI) are compositionally biased toward basic and acidic residues. ATP-binding positions include L42, R43, G84, K87, T88, S89, 150 to 152 (EDF), R193, Y203, and R240. T88 is a binding site for Mg(2+). A small ATPAse domain (RuvB-S) region spans residues 204-274 (EPHELEKIVV…TANAALEMQG (71 aa)). Residues 277 to 355 (HLGLDRTDRE…HLGFPVRDGG (79 aa)) form a head domain (RuvB-H) region. R313, R332, and R337 together coordinate DNA.

The protein belongs to the RuvB family. As to quaternary structure, homohexamer. Forms an RuvA(8)-RuvB(12)-Holliday junction (HJ) complex. HJ DNA is sandwiched between 2 RuvA tetramers; dsDNA enters through RuvA and exits via RuvB. An RuvB hexamer assembles on each DNA strand where it exits the tetramer. Each RuvB hexamer is contacted by two RuvA subunits (via domain III) on 2 adjacent RuvB subunits; this complex drives branch migration. In the full resolvosome a probable DNA-RuvA(4)-RuvB(12)-RuvC(2) complex forms which resolves the HJ.

It localises to the cytoplasm. The catalysed reaction is ATP + H2O = ADP + phosphate + H(+). In terms of biological role, the RuvA-RuvB-RuvC complex processes Holliday junction (HJ) DNA during genetic recombination and DNA repair, while the RuvA-RuvB complex plays an important role in the rescue of blocked DNA replication forks via replication fork reversal (RFR). RuvA specifically binds to HJ cruciform DNA, conferring on it an open structure. The RuvB hexamer acts as an ATP-dependent pump, pulling dsDNA into and through the RuvAB complex. RuvB forms 2 homohexamers on either side of HJ DNA bound by 1 or 2 RuvA tetramers; 4 subunits per hexamer contact DNA at a time. Coordinated motions by a converter formed by DNA-disengaged RuvB subunits stimulates ATP hydrolysis and nucleotide exchange. Immobilization of the converter enables RuvB to convert the ATP-contained energy into a lever motion, pulling 2 nucleotides of DNA out of the RuvA tetramer per ATP hydrolyzed, thus driving DNA branch migration. The RuvB motors rotate together with the DNA substrate, which together with the progressing nucleotide cycle form the mechanistic basis for DNA recombination by continuous HJ branch migration. Branch migration allows RuvC to scan DNA until it finds its consensus sequence, where it cleaves and resolves cruciform DNA. This chain is Holliday junction branch migration complex subunit RuvB, found in Rubrobacter xylanophilus (strain DSM 9941 / JCM 11954 / NBRC 16129 / PRD-1).